Reading from the N-terminus, the 204-residue chain is MQAPPSFYEGDTLVVAKKLLGHKLVHIVDGIKRSGFIVEVEAYKGPDDKAAHSYGGRRTDRTEVMFGAPGHAYVYLIYGMYHCFNVITAPIGTPQGVLIRALEPVDGIEDMKLARYNKTDITKAQYKNLTNGPGKLCRALGITLEERGVSLQSDTLHIELVPEEDHLSSTHNIIAGPRINIDYAEEAVHYPWRFYYEKHPFVSK.

It belongs to the DNA glycosylase MPG family.

In Bacillus mycoides (strain KBAB4) (Bacillus weihenstephanensis), this protein is Putative 3-methyladenine DNA glycosylase.